A 456-amino-acid chain; its full sequence is Trigger factor (456 aa).

The region spanning 192–277 is the PPIase FKBP-type domain; that stretch reads GDTVVIDFVG…IHEVKTKEVP (86 aa).

It belongs to the FKBP-type PPIase family. Tig subfamily.

It localises to the cytoplasm. It carries out the reaction [protein]-peptidylproline (omega=180) = [protein]-peptidylproline (omega=0). Its function is as follows. Involved in protein export. Acts as a chaperone by maintaining the newly synthesized protein in an open conformation. Functions as a peptidyl-prolyl cis-trans isomerase. The chain is Trigger factor from Streptococcus pyogenes serotype M4 (strain MGAS10750).